The following is a 1252-amino-acid chain: Plasma membrane calcium-transporting ATPase mca-1 (1252 aa).

Residues Met-1 to Asp-121 lie on the Cytoplasmic side of the membrane. Residues Pro-122–Pro-142 form a helical membrane-spanning segment. Over Thr-143–Thr-180 the chain is Extracellular. Residues Asn-155 and Asn-164 are each glycosylated (N-linked (GlcNAc...) asparagine). Residues Ala-181–Val-201 form a helical membrane-spanning segment. Topologically, residues Asn-202–Lys-376 are cytoplasmic. The interval Asp-330–Asp-361 is disordered. Positions Thr-333–Ser-357 are enriched in low complexity. Residues Leu-377–Val-397 form a helical membrane-spanning segment. At Thr-398–Lys-422 the chain is on the extracellular side. The chain crosses the membrane as a helical span at residues Phe-423–Ile-443. 3 residues coordinate Ca(2+): Val-432, Ile-435, and Glu-437. At Ala-444–Lys-879 the chain is on the cytoplasmic side. Asp-479 (4-aspartylphosphate intermediate) is an active-site residue. Residues Asp-479 and Thr-481 each coordinate Mg(2+). ATP contacts are provided by Thr-481, Glu-553, Lys-612, Thr-733, Gly-734, Asp-735, Arg-792, and Lys-798. Residue Asp-822 coordinates Mg(2+). Residue Asn-825 participates in ATP binding. The helical transmembrane segment at Phe-880–Val-900 threads the bilayer. Asn-888 provides a ligand contact to Ca(2+). At Thr-901 to Lys-908 the chain is on the extracellular side. A helical transmembrane segment spans residues Ala-909–Thr-929. Positions 916 and 920 each coordinate Ca(2+). Topologically, residues Glu-930 to His-960 are cytoplasmic. Residues Ala-961–Ile-981 form a helical membrane-spanning segment. Topologically, residues Lys-982 to Leu-989 are extracellular. The chain crosses the membrane as a helical span at residues Phe-990–Phe-1010. The Cytoplasmic portion of the chain corresponds to Asn-1011–Cys-1035. A helical transmembrane segment spans residues Val-1036 to Phe-1056. At Ser-1057 to Gln-1065 the chain is on the extracellular side. A helical membrane pass occupies residues Trp-1066–Ile-1086. Topologically, residues Pro-1087–Asn-1252 are cytoplasmic. A calmodulin-binding subdomain A region spans residues Leu-1124–His-1142. The segment at Leu-1143–Glu-1152 is calmodulin-binding subdomain B. Residues Tyr-1181–Asn-1252 form a disordered region.

The protein belongs to the cation transport ATPase (P-type) (TC 3.A.3) family. Type IIB subfamily. Interacts with calmodulin.

The protein localises to the cell membrane. It carries out the reaction Ca(2+)(in) + ATP + H2O = Ca(2+)(out) + ADP + phosphate + H(+). Catalyzes the hydrolysis of ATP coupled with the transport of calcium across a membrane. In Caenorhabditis elegans, this protein is Plasma membrane calcium-transporting ATPase mca-1.